Reading from the N-terminus, the 535-residue chain is Peptide chain release factor 3 (535 aa).

The tr-type G domain maps to 8–276 (ARRRTFAIIS…ALVEQAPPPG (269 aa)). GTP is bound by residues 17-24 (SHPDAGKT), 85-89 (DTPGH), and 139-142 (NKMD).

It belongs to the TRAFAC class translation factor GTPase superfamily. Classic translation factor GTPase family. PrfC subfamily.

It is found in the cytoplasm. Functionally, increases the formation of ribosomal termination complexes and stimulates activities of RF-1 and RF-2. It binds guanine nucleotides and has strong preference for UGA stop codons. It may interact directly with the ribosome. The stimulation of RF-1 and RF-2 is significantly reduced by GTP and GDP, but not by GMP. In Bordetella petrii (strain ATCC BAA-461 / DSM 12804 / CCUG 43448), this protein is Peptide chain release factor 3.